A 617-amino-acid chain; its full sequence is Ceramide transfer protein (617 aa).

The span at 1-11 shows a compositional bias: polar residues; it reads MSDNQSWNSSG. Positions 1–23 are disordered; it reads MSDNQSWNSSGSEEDLEPESGPP. The PH domain maps to 23–117; sequence PVERCGVLSK…WIDSIEQHKS (95 aa). A coiled-coil region spans residues 268–302; the sequence is REDSWQKRLDKEIEKRRRVEEAYKNAMTELKKKSH. An FFAT motif is present at residues 320-326; that stretch reads EFFDAVE. The disordered stretch occupies residues 341–382; sequence EKGRSHWPPSPPSSEAHTAAGSHRLVQAPPSCPPPTDLVSSS. The 229-residue stretch at 383–611 folds into the START domain; it reads DEHRFRIQVE…FTSYVQEKTA (229 aa). An N-acylsphing-4-enine is bound by residues glutamate 466, glutamine 487, asparagine 524, and tyrosine 572.

It is found in the cytoplasm. The protein resides in the golgi apparatus. Its subcellular location is the endoplasmic reticulum. The catalysed reaction is N-hexadecanoylsphing-4-enine(in) = N-hexadecanoylsphing-4-enine(out). Its function is as follows. May mediate the intracellular trafficking of ceramide in a non-vesicular manner. This Xenopus laevis (African clawed frog) protein is Ceramide transfer protein (cert1).